The following is a 293-amino-acid chain: Protease HtpX homolog (293 aa).

The next 2 helical transmembrane spans lie at 4–24 (VILF…TLRI) and 40–60 (ALLM…LLIS). A Zn(2+)-binding site is contributed by histidine 146. Glutamate 147 is a catalytic residue. Histidine 150 is a binding site for Zn(2+). The next 2 membrane-spanning stretches (helical) occupy residues 161–181 (LIQG…GYFV) and 198–218 (VTVI…VAWF). Residue glutamate 223 coordinates Zn(2+).

The protein belongs to the peptidase M48B family. It depends on Zn(2+) as a cofactor.

The protein resides in the cell inner membrane. The polypeptide is Protease HtpX homolog (Bordetella avium (strain 197N)).